We begin with the raw amino-acid sequence, 419 residues long: Ubiquitin-like modifier-activating enzyme 5 (419 aa).

The segment at 18 to 47 (NRLGNVKKDHPLESSSNSKPTHQPKSPAPY) is disordered. Over residues 30 to 41 (ESSSNSKPTHQP) the composition is skewed to polar residues. Residues Gly94, Asp115, Lys138, Asn161, and Asn194 each coordinate ATP. Zn(2+)-binding residues include Cys236 and Cys239. Cys260 serves as the catalytic Glycyl thioester intermediate. Positions 313 and 318 each coordinate Zn(2+).

It belongs to the ubiquitin-activating E1 family. UBA5 subfamily. Interacts with ufc-1. In terms of tissue distribution, expressed in the intestine.

Its function is as follows. E1-like enzyme which activates ufm-1. Required for interaction between ufm-1 and ufc-1. This is Ubiquitin-like modifier-activating enzyme 5 from Caenorhabditis elegans.